The chain runs to 485 residues: Ribulose bisphosphate carboxylase large chain 2 (485 aa).

Residues Asn124 and Thr174 each contribute to the substrate site. Lys176 serves as the catalytic Proton acceptor. Position 178 (Lys178) interacts with substrate. Residues Lys202, Asp204, and Glu205 each contribute to the Mg(2+) site. Lys202 is modified (N6-carboxylysine). The active-site Proton acceptor is the His294. Residues Arg295, His327, and Ser379 each contribute to the substrate site.

It belongs to the RuBisCO large chain family. Type I subfamily. In terms of assembly, heterohexadecamer of 8 large chains and 8 small chains. Requires Mg(2+) as cofactor.

The catalysed reaction is 2 (2R)-3-phosphoglycerate + 2 H(+) = D-ribulose 1,5-bisphosphate + CO2 + H2O. It carries out the reaction D-ribulose 1,5-bisphosphate + O2 = 2-phosphoglycolate + (2R)-3-phosphoglycerate + 2 H(+). RuBisCO catalyzes two reactions: the carboxylation of D-ribulose 1,5-bisphosphate, the primary event in carbon dioxide fixation, as well as the oxidative fragmentation of the pentose substrate. Both reactions occur simultaneously and in competition at the same active site. In Rhodopseudomonas palustris (strain BisB5), this protein is Ribulose bisphosphate carboxylase large chain 2.